Consider the following 42-residue polypeptide: Photosystem I reaction center subunit IX (42 aa).

Residues 7–27 (YLSAAPVLSTLWLGALAALLI) traverse the membrane as a helical segment.

The protein belongs to the PsaJ family.

It is found in the plastid membrane. Its function is as follows. May help in the organization of the PsaE and PsaF subunits. This Cuscuta reflexa (Southern Asian dodder) protein is Photosystem I reaction center subunit IX.